The primary structure comprises 310 residues: tRNA uridine(34) hydroxylase (310 aa).

Positions 127-225 (KNQNTIVIDT…YLDDIPKEKN (99 aa)) constitute a Rhodanese domain. Catalysis depends on cysteine 185, which acts as the Cysteine persulfide intermediate.

It belongs to the TrhO family.

It catalyses the reaction uridine(34) in tRNA + AH2 + O2 = 5-hydroxyuridine(34) in tRNA + A + H2O. Its function is as follows. Catalyzes oxygen-dependent 5-hydroxyuridine (ho5U) modification at position 34 in tRNAs. The chain is tRNA uridine(34) hydroxylase from Prochlorococcus marinus (strain MIT 9312).